The following is a 179-amino-acid chain: uncharacterized protein (179 aa).

This is an uncharacterized protein from Escherichia coli (strain K12).